The sequence spans 419 residues: Cysteine desulfurase (419 aa).

Residues 69-70, Asn157, Gln185, and 205-207 each bind pyridoxal 5'-phosphate; these read AT and SAH. Lys208 bears the N6-(pyridoxal phosphate)lysine mark. Thr245 contributes to the pyridoxal 5'-phosphate binding site. The Cysteine persulfide intermediate role is filled by Cys333. [2Fe-2S] cluster is bound at residue Cys333. Residues 392–419 form a disordered region; it reads TPIQDEVRDDNRASSNSLNRGSAASKES. Positions 404 to 413 are enriched in polar residues; that stretch reads ASSNSLNRGS.

Belongs to the class-V pyridoxal-phosphate-dependent aminotransferase family. NifS/IscS subfamily. As to quaternary structure, homodimer. Pyridoxal 5'-phosphate is required as a cofactor.

The enzyme catalyses (sulfur carrier)-H + L-cysteine = (sulfur carrier)-SH + L-alanine. In terms of biological role, catalyzes the removal of elemental sulfur atoms from cysteine to produce alanine. Seems to participate in the biosynthesis of the nitrogenase metalloclusters by providing the inorganic sulfur required for the Fe-S core formation. In Frankia sp. (strain EuIK1), this protein is Cysteine desulfurase.